A 390-amino-acid chain; its full sequence is Chorismate synthase (390 aa).

Arg48 and Arg54 together coordinate NADP(+). FMN contacts are provided by residues 125-127 (RSS), 238-239 (NA), Gly278, 293-297 (KPTSS), and Arg319. Residues 359–390 (PRIPGSTTNQIHPVEMQASAPRAEDPEPDESS) form a disordered region.

The protein belongs to the chorismate synthase family. Homotetramer. It depends on FMNH2 as a cofactor.

It carries out the reaction 5-O-(1-carboxyvinyl)-3-phosphoshikimate = chorismate + phosphate. It functions in the pathway metabolic intermediate biosynthesis; chorismate biosynthesis; chorismate from D-erythrose 4-phosphate and phosphoenolpyruvate: step 7/7. In terms of biological role, catalyzes the anti-1,4-elimination of the C-3 phosphate and the C-6 proR hydrogen from 5-enolpyruvylshikimate-3-phosphate (EPSP) to yield chorismate, which is the branch point compound that serves as the starting substrate for the three terminal pathways of aromatic amino acid biosynthesis. This reaction introduces a second double bond into the aromatic ring system. In Nitrosomonas europaea (strain ATCC 19718 / CIP 103999 / KCTC 2705 / NBRC 14298), this protein is Chorismate synthase.